A 423-amino-acid chain; its full sequence is Glutamyl-tRNA reductase (423 aa).

Residues 51-54, Ser99, 104-106, and Gln110 contribute to the substrate site; these read TCNR and EDQ. Cys52 serves as the catalytic Nucleophile. An NADP(+)-binding site is contributed by 179–184; sequence GSGEMG.

Belongs to the glutamyl-tRNA reductase family. Homodimer.

The enzyme catalyses (S)-4-amino-5-oxopentanoate + tRNA(Glu) + NADP(+) = L-glutamyl-tRNA(Glu) + NADPH + H(+). It participates in porphyrin-containing compound metabolism; protoporphyrin-IX biosynthesis; 5-aminolevulinate from L-glutamyl-tRNA(Glu): step 1/2. Catalyzes the NADPH-dependent reduction of glutamyl-tRNA(Glu) to glutamate 1-semialdehyde (GSA). In Methanoculleus marisnigri (strain ATCC 35101 / DSM 1498 / JR1), this protein is Glutamyl-tRNA reductase.